Reading from the N-terminus, the 670-residue chain is DNA ligase (670 aa).

NAD(+)-binding positions include 32–36 (DSEYD), 81–82 (SL), and Glu114. The N6-AMP-lysine intermediate role is filled by Lys116. Positions 137, 174, 291, and 315 each coordinate NAD(+). Zn(2+) is bound by residues Cys409, Cys412, Cys427, and Cys433. Positions 592-670 (ASENLFKDKT…EEEFLAQITR (79 aa)) constitute a BRCT domain.

The protein belongs to the NAD-dependent DNA ligase family. LigA subfamily. Mg(2+) is required as a cofactor. It depends on Mn(2+) as a cofactor.

The catalysed reaction is NAD(+) + (deoxyribonucleotide)n-3'-hydroxyl + 5'-phospho-(deoxyribonucleotide)m = (deoxyribonucleotide)n+m + AMP + beta-nicotinamide D-nucleotide.. Its function is as follows. DNA ligase that catalyzes the formation of phosphodiester linkages between 5'-phosphoryl and 3'-hydroxyl groups in double-stranded DNA using NAD as a coenzyme and as the energy source for the reaction. It is essential for DNA replication and repair of damaged DNA. The chain is DNA ligase from Haemophilus influenzae (strain PittGG).